A 144-amino-acid chain; its full sequence is Large ribosomal subunit protein uL15 (144 aa).

A disordered region spans residues 1 to 49; sequence MRLNTLSPAAGSKSAPKRVGRGIGSGLGKTAGRGHKGQKSRSGGGVRVG. The segment covering 21–31 has biased composition (gly residues); it reads RGIGSGLGKTA.

Belongs to the universal ribosomal protein uL15 family. In terms of assembly, part of the 50S ribosomal subunit.

Binds to the 23S rRNA. The sequence is that of Large ribosomal subunit protein uL15 from Shewanella frigidimarina (strain NCIMB 400).